The primary structure comprises 318 residues: NADH-ubiquinone oxidoreductase chain 1 (318 aa).

A run of 9 helical transmembrane segments spans residues 2–22 (FLMN…FLTL), 37–57 (PNIV…KLFI), 69–89 (LMFT…WIPM), 100–120 (LGVL…LWSG), 136–156 (VAQT…TMMM), 171–191 (HMWL…STLA), 206–226 (ELVS…FFMA), 253–273 (ELFT…FLWI), and 294–314 (LPLT…SAGI).

The protein belongs to the complex I subunit 1 family.

The protein resides in the mitochondrion inner membrane. The enzyme catalyses a ubiquinone + NADH + 5 H(+)(in) = a ubiquinol + NAD(+) + 4 H(+)(out). Core subunit of the mitochondrial membrane respiratory chain NADH dehydrogenase (Complex I) that is believed to belong to the minimal assembly required for catalysis. Complex I functions in the transfer of electrons from NADH to the respiratory chain. The immediate electron acceptor for the enzyme is believed to be ubiquinone. The protein is NADH-ubiquinone oxidoreductase chain 1 (MT-ND1) of Tolypeutes matacus (Southern three-banded armadillo).